The primary structure comprises 283 residues: Pantothenate synthetase (283 aa).

31 to 38 (MGALHDGH) is an ATP binding site. His-38 serves as the catalytic Proton donor. Gln-62 is a (R)-pantoate binding site. Gln-62 provides a ligand contact to beta-alanine. ATP is bound at residue 148 to 151 (GKKD). Position 154 (Gln-154) interacts with (R)-pantoate. ATP-binding positions include Ile-177 and 185 to 188 (KSSR).

It belongs to the pantothenate synthetase family. As to quaternary structure, homodimer.

It localises to the cytoplasm. It carries out the reaction (R)-pantoate + beta-alanine + ATP = (R)-pantothenate + AMP + diphosphate + H(+). Its pathway is cofactor biosynthesis; (R)-pantothenate biosynthesis; (R)-pantothenate from (R)-pantoate and beta-alanine: step 1/1. Its function is as follows. Catalyzes the condensation of pantoate with beta-alanine in an ATP-dependent reaction via a pantoyl-adenylate intermediate. This Oceanobacillus iheyensis (strain DSM 14371 / CIP 107618 / JCM 11309 / KCTC 3954 / HTE831) protein is Pantothenate synthetase.